We begin with the raw amino-acid sequence, 150 residues long: Arginine repressor (150 aa).

The protein belongs to the ArgR family.

It is found in the cytoplasm. It participates in amino-acid biosynthesis; L-arginine biosynthesis [regulation]. Regulates arginine biosynthesis genes. This is Arginine repressor from Desulfitobacterium hafniense (strain DSM 10664 / DCB-2).